We begin with the raw amino-acid sequence, 290 residues long: Diaminopimelate epimerase (290 aa).

Substrate is bound by residues Asn17, Gln49, and Asn69. Cys78 (proton donor) is an active-site residue. Substrate is bound by residues Gly79–Asn80, Asn165, Asn198, and Glu216–Arg217. Residue Cys225 is the Proton acceptor of the active site. Substrate is bound at residue Gly226–Ser227.

Belongs to the diaminopimelate epimerase family. In terms of assembly, homodimer.

Its subcellular location is the cytoplasm. It carries out the reaction (2S,6S)-2,6-diaminopimelate = meso-2,6-diaminopimelate. Its pathway is amino-acid biosynthesis; L-lysine biosynthesis via DAP pathway; DL-2,6-diaminopimelate from LL-2,6-diaminopimelate: step 1/1. In terms of biological role, catalyzes the stereoinversion of LL-2,6-diaminopimelate (L,L-DAP) to meso-diaminopimelate (meso-DAP), a precursor of L-lysine and an essential component of the bacterial peptidoglycan. In Methylocella silvestris (strain DSM 15510 / CIP 108128 / LMG 27833 / NCIMB 13906 / BL2), this protein is Diaminopimelate epimerase.